Consider the following 333-residue polypeptide: Ketol-acid reductoisomerase (NADP(+)) (333 aa).

The KARI N-terminal Rossmann domain occupies 2–182 (ANIYYDADCD…GGGRAGILET (181 aa)). NADP(+) contacts are provided by residues 25–28 (YGSQ), Lys48, Ser51, Ser53, and 83–86 (DTIQ). His108 is an active-site residue. Gly134 contributes to the NADP(+) binding site. One can recognise a KARI C-terminal knotted domain in the interval 183–331 (SFREETETDL…KKLRSMMKWL (149 aa)). Residues Asp191, Glu195, Glu227, and Glu231 each contribute to the Mg(2+) site. Ser252 is a substrate binding site.

The protein belongs to the ketol-acid reductoisomerase family. Mg(2+) serves as cofactor.

It catalyses the reaction (2R)-2,3-dihydroxy-3-methylbutanoate + NADP(+) = (2S)-2-acetolactate + NADPH + H(+). It carries out the reaction (2R,3R)-2,3-dihydroxy-3-methylpentanoate + NADP(+) = (S)-2-ethyl-2-hydroxy-3-oxobutanoate + NADPH + H(+). Its pathway is amino-acid biosynthesis; L-isoleucine biosynthesis; L-isoleucine from 2-oxobutanoate: step 2/4. It participates in amino-acid biosynthesis; L-valine biosynthesis; L-valine from pyruvate: step 2/4. Its function is as follows. Involved in the biosynthesis of branched-chain amino acids (BCAA). Catalyzes an alkyl-migration followed by a ketol-acid reduction of (S)-2-acetolactate (S2AL) to yield (R)-2,3-dihydroxy-isovalerate. In the isomerase reaction, S2AL is rearranged via a Mg-dependent methyl migration to produce 3-hydroxy-3-methyl-2-ketobutyrate (HMKB). In the reductase reaction, this 2-ketoacid undergoes a metal-dependent reduction by NADPH to yield (R)-2,3-dihydroxy-isovalerate. The sequence is that of Ketol-acid reductoisomerase (NADP(+)) from Leptospira borgpetersenii serovar Hardjo-bovis (strain JB197).